The chain runs to 1605 residues: Pentafunctional AROM polypeptide (1605 aa).

A 3-dehydroquinate synthase region spans residues 1–384; that stretch reads MTGPTKISIL…YEPRASVVPN (384 aa). NAD(+) contacts are provided by residues 44-46, 81-84, 114-116, and Asp119; these read DTN, EVSK, and GGV. Arg130 provides a ligand contact to 7-phospho-2-dehydro-3-deoxy-D-arabino-heptonate. NAD(+) is bound at residue 139–140; sequence TT. 2 residues coordinate 7-phospho-2-dehydro-3-deoxy-D-arabino-heptonate: Asp146 and Lys152. Lys161 is an NAD(+) binding site. Position 162 (Asn162) interacts with 7-phospho-2-dehydro-3-deoxy-D-arabino-heptonate. Residues 179–182 and Asn190 contribute to the NAD(+) site; that span reads FLET. Residue Glu194 participates in Zn(2+) binding. Residues 194 to 197 and Lys250 each bind 7-phospho-2-dehydro-3-deoxy-D-arabino-heptonate; that span reads EVIK. The active-site Proton acceptor; for 3-dehydroquinate synthase activity is Glu260. Residues 264–268 and His271 contribute to the 7-phospho-2-dehydro-3-deoxy-D-arabino-heptonate site; that span reads RNLLN. His271 is a binding site for Zn(2+). Residue His275 is the Proton acceptor; for 3-dehydroquinate synthase activity of the active site. The 7-phospho-2-dehydro-3-deoxy-D-arabino-heptonate site is built by His287 and Lys356. Position 287 (His287) interacts with Zn(2+). The interval 397 to 842 is EPSP synthase; sequence VHPGVSTTSE…WDTLRQKFAV (446 aa). Cys824 functions as the For EPSP synthase activity in the catalytic mechanism. The tract at residues 864 to 1055 is shikimate kinase; the sequence is SASVFIIGMR…KKKQHSFFVS (192 aa). 871 to 878 lines the ATP pocket; the sequence is GMRGAGKT. The tract at residues 1056–1276 is 3-dehydroquinase; the sequence is LTLPDVRGAD…AAPGQLSATD (221 aa). His1179 serves as the catalytic Proton acceptor; for 3-dehydroquinate dehydratase activity. Lys1207 acts as the Schiff-base intermediate with substrate; for 3-dehydroquinate dehydratase activity in catalysis. Residues 1289-1605 form a shikimate dehydrogenase region; sequence KKRFALFGSP…LSGRTMLTCS (317 aa).

The protein in the N-terminal section; belongs to the sugar phosphate cyclases superfamily. Dehydroquinate synthase family. This sequence in the 2nd section; belongs to the EPSP synthase family. In the 3rd section; belongs to the shikimate kinase family. It in the 4th section; belongs to the type-I 3-dehydroquinase family. The protein in the C-terminal section; belongs to the shikimate dehydrogenase family. As to quaternary structure, homodimer. Zn(2+) serves as cofactor.

It localises to the cytoplasm. The enzyme catalyses 7-phospho-2-dehydro-3-deoxy-D-arabino-heptonate = 3-dehydroquinate + phosphate. It carries out the reaction 3-dehydroquinate = 3-dehydroshikimate + H2O. It catalyses the reaction shikimate + NADP(+) = 3-dehydroshikimate + NADPH + H(+). The catalysed reaction is shikimate + ATP = 3-phosphoshikimate + ADP + H(+). The enzyme catalyses 3-phosphoshikimate + phosphoenolpyruvate = 5-O-(1-carboxyvinyl)-3-phosphoshikimate + phosphate. It participates in metabolic intermediate biosynthesis; chorismate biosynthesis; chorismate from D-erythrose 4-phosphate and phosphoenolpyruvate: step 2/7. It functions in the pathway metabolic intermediate biosynthesis; chorismate biosynthesis; chorismate from D-erythrose 4-phosphate and phosphoenolpyruvate: step 3/7. The protein operates within metabolic intermediate biosynthesis; chorismate biosynthesis; chorismate from D-erythrose 4-phosphate and phosphoenolpyruvate: step 4/7. Its pathway is metabolic intermediate biosynthesis; chorismate biosynthesis; chorismate from D-erythrose 4-phosphate and phosphoenolpyruvate: step 5/7. It participates in metabolic intermediate biosynthesis; chorismate biosynthesis; chorismate from D-erythrose 4-phosphate and phosphoenolpyruvate: step 6/7. Functionally, the AROM polypeptide catalyzes 5 consecutive enzymatic reactions in prechorismate polyaromatic amino acid biosynthesis. The chain is Pentafunctional AROM polypeptide from Aspergillus fumigatus (strain CBS 144.89 / FGSC A1163 / CEA10) (Neosartorya fumigata).